The following is a 561-amino-acid chain: MGSSRAPRMGSVGGHGLMALLMAGLILPGILAKSIGTLSDPCKDPTRITSPNDPCLIGKTGSNSISSQGGSSSFSSQGGSSSFSSHGGSSSSQGSSSGSLIYKPGTGYSQSSYSYGSGGSRPGGSGSQSGSSGSQSGSSGSQSGSSGSQSGSSGSQSGSSGSQSGSSGSQSGSSGSQSGSSGSQSGRWVSSSSQWVSSSSQSGSSGSSRDRPGSGSALPTGDKTSGMSQSGGSSTSQSSSSNLRPCSSNVPDSPCSGGPVITHSGPYISGTHTVSGGQRPVVVVVEQHGSGGPGFQGMPCSNGGPAGKPCPPITSVQKPYGGYEVVGGSANSYLVPGMTYSGGKIYPVGYFTKDNPIRGSPGAPSFAAGPPVSEGKYFSSNPIIPSRGSSSSSGYPVGVAFQPVGSGGVQPCGTGSVSSKGPCSGTRIQITSSSSSTSYHPCSGGPSQGPCSSPGTGSISGGSSSLSSGKIVLQPCGSKSTSSGYPCLSVPSSPLNGGLNGSPQPVPSVGVKLCGLNSPGRVPCRSIRNILTQVKPLGPQLMDPKVSLPQGEPQGEPLEKS.

Residues 1–32 (MGSSRAPRMGSVGGHGLMALLMAGLILPGILA) form the signal peptide. 3 disordered regions span residues 41 to 275 (PCKD…HTVS), 415 to 466 (GSVS…SSSL), and 536 to 561 (PLGP…LEKS). Over residues 61–99 (GSNSISSQGGSSSFSSQGGSSSFSSHGGSSSSQGSSSGS) the composition is skewed to low complexity. The span at 116 to 127 (GSGGSRPGGSGS) shows a compositional bias: gly residues. Composition is skewed to low complexity over residues 128-207 (QSGS…SSGS) and 224-248 (TSGM…PCSS). The segment covering 415–430 (GSVSSKGPCSGTRIQI) has biased composition (polar residues). Positions 431–466 (TSSSSSTSYHPCSGGPSQGPCSSPGTGSISGGSSSL) are enriched in low complexity.

It localises to the secreted. Its function is as follows. Important for the epidermal barrier integrity. This Mus musculus (Mouse) protein is Corneodesmosin (Cdsn).